A 212-amino-acid polypeptide reads, in one-letter code: Phosphoenolpyruvate guanylyltransferase (212 aa).

Residues T139, G155, and S158 each contribute to the phosphoenolpyruvate site.

This sequence belongs to the CofC family.

The enzyme catalyses phosphoenolpyruvate + GTP + H(+) = enolpyruvoyl-2-diphospho-5'-guanosine + diphosphate. It participates in cofactor biosynthesis; coenzyme F420 biosynthesis. Functionally, guanylyltransferase that catalyzes the activation of phosphoenolpyruvate (PEP) as enolpyruvoyl-2-diphospho-5'-guanosine, via the condensation of PEP with GTP. It is involved in the biosynthesis of coenzyme F420, a hydride carrier cofactor. This Streptomyces coelicolor (strain ATCC BAA-471 / A3(2) / M145) protein is Phosphoenolpyruvate guanylyltransferase.